The sequence spans 539 residues: Membrane protein insertase YidC (539 aa).

The next 5 helical transmembrane spans lie at 6-26, 341-361, 416-436, 454-474, and 495-515; these read TLLV…WQVA, SVIQ…TFIV, LGGC…YWAL, LSAQ…MFLI, and PVMF…YWLV.

It belongs to the OXA1/ALB3/YidC family. Type 1 subfamily. As to quaternary structure, interacts with the Sec translocase complex via SecD. Specifically interacts with transmembrane segments of nascent integral membrane proteins during membrane integration.

Its subcellular location is the cell inner membrane. Functionally, required for the insertion and/or proper folding and/or complex formation of integral membrane proteins into the membrane. Involved in integration of membrane proteins that insert both dependently and independently of the Sec translocase complex, as well as at least some lipoproteins. Aids folding of multispanning membrane proteins. This Vibrio vulnificus (strain CMCP6) protein is Membrane protein insertase YidC.